Here is a 291-residue protein sequence, read N- to C-terminus: ATP synthase gamma chain (291 aa).

It belongs to the ATPase gamma chain family. In terms of assembly, F-type ATPases have 2 components, CF(1) - the catalytic core - and CF(0) - the membrane proton channel. CF(1) has five subunits: alpha(3), beta(3), gamma(1), delta(1), epsilon(1). CF(0) has three main subunits: a, b and c.

It is found in the cell inner membrane. Its function is as follows. Produces ATP from ADP in the presence of a proton gradient across the membrane. The gamma chain is believed to be important in regulating ATPase activity and the flow of protons through the CF(0) complex. This chain is ATP synthase gamma chain, found in Neisseria meningitidis serogroup C / serotype 2a (strain ATCC 700532 / DSM 15464 / FAM18).